Here is a 385-residue protein sequence, read N- to C-terminus: Probable caffeine synthase 4 (385 aa).

7 residues coordinate S-adenosyl-L-homocysteine: Tyr18, Cys62, Asn67, Asp101, Leu102, Ser140, and Phe141. 3 residues coordinate caffeine: Tyr158, Gln161, and Phe162. Mg(2+) is bound at residue Asn179. Thr238 is a binding site for caffeine. Asp261, Phe263, and Asn264 together coordinate Mg(2+). Tyr369 contributes to the caffeine binding site.

This sequence belongs to the methyltransferase superfamily. Type-7 methyltransferase family. Requires Mg(2+) as cofactor. Expressed in roots, stems, young and old leaves.

The protein operates within alkaloid biosynthesis. Its function is as follows. May be involved in the biosynthesis of caffeine. The polypeptide is Probable caffeine synthase 4 (Coffea arabica (Arabian coffee)).